Consider the following 1207-residue polypeptide: DNA-directed RNA polymerase subunit beta' (1207 aa).

Zn(2+) contacts are provided by Cys60, Cys62, Cys75, and Cys78. Mg(2+)-binding residues include Asp450, Asp452, and Asp454. Zn(2+)-binding residues include Cys819, Cys893, Cys900, and Cys903.

The protein belongs to the RNA polymerase beta' chain family. In terms of assembly, the RNAP catalytic core consists of 2 alpha, 1 beta, 1 beta' and 1 omega subunit. When a sigma factor is associated with the core the holoenzyme is formed, which can initiate transcription. It depends on Mg(2+) as a cofactor. Requires Zn(2+) as cofactor.

It carries out the reaction RNA(n) + a ribonucleoside 5'-triphosphate = RNA(n+1) + diphosphate. Functionally, DNA-dependent RNA polymerase catalyzes the transcription of DNA into RNA using the four ribonucleoside triphosphates as substrates. The polypeptide is DNA-directed RNA polymerase subunit beta' (Streptococcus pyogenes serotype M12 (strain MGAS2096)).